A 635-amino-acid polypeptide reads, in one-letter code: MHGLLLAAGLLSLPLHVLAHPQPSTSTSLAGRAGAVDLNEFRIAHRSSYTSHDEMKKLPSIASFRQGTYLEVATELVKQTMPNMEFRLVDDHYVGDSGIGHVRFRQTMHGIDIDNSDFNVNVGKDGKVLSHGNSFYTGPAPSSNPMVKRDFIDPMQALHGVRKALNLPIKADGAHVEDMSEHKVMFKGTSGALSDPTAKLCYMAKEDGSLALTWRVETDIGDNWLLSYMDAKESSKVHNVVDYVAHATFQVYKWGLADPTEGKREIITNPWNLKTSPLTWLSDGHNNYTATRGNNAIAQYNPDGGNDYENNYRPSPKNLKFEYPYSPDMNPPKTYIDASVTELFYTSNICHDLYYMLGFNEKAGNFQVNNRGQGGKGNDFVILNAQDGSGTNNANFATPPDGQPGRMRAYIWTRANPPRDASFEAGTIIHEYTHGLSNRLCGGPANSRCLNALESGGMGEGWGDFYATAVRLKPNDTRKTNYVKGGWVNNSPKGVRMYPYSTDMNVNPLVYTSNNKLNEVHAIGTVWCTMLYEVLWNLIDKHGKNDGPVPIFENGVPNDGKYLAMKIVMDGMAIQPCNPNFVQARDAILDADMNLTKGANKCEIWKGFAKRGLGVGAKFDPKNRTGSTQVPNECK.

Positions 1-19 (MHGLLLAAGLLSLPLHVLA) are cleaved as a signal peptide. The propeptide occupies 20 to 246 (HPQPSTSTSL…VHNVVDYVAH (227 aa)). Asn287 carries an N-linked (GlcNAc...) asparagine glycan. His430 is a Zn(2+) binding site. Glu431 is a catalytic residue. A Zn(2+)-binding site is contributed by His434. Asn475, Asn594, and Asn623 each carry an N-linked (GlcNAc...) asparagine glycan.

This sequence belongs to the peptidase M36 family. Zn(2+) is required as a cofactor.

It is found in the secreted. Secreted metalloproteinase probably acting as a virulence factor. This Trichophyton rubrum (Athlete's foot fungus) protein is Extracellular metalloproteinase 1 (MEP1).